The chain runs to 190 residues: Small ribosomal subunit protein uS5 (190 aa).

An S5 DRBM domain is found at 21 to 84; it reads FADRLVAINR…EQAKRQMIRV (64 aa). A disordered region spans residues 156–190; sequence KKEQSPRSVAQRRGKKVADILPKRDEAPAAEAAEA. A compositionally biased stretch (basic and acidic residues) spans 171 to 182; that stretch reads KVADILPKRDEA.

This sequence belongs to the universal ribosomal protein uS5 family. As to quaternary structure, part of the 30S ribosomal subunit. Contacts proteins S4 and S8.

Its function is as follows. With S4 and S12 plays an important role in translational accuracy. Functionally, located at the back of the 30S subunit body where it stabilizes the conformation of the head with respect to the body. The protein is Small ribosomal subunit protein uS5 of Ruegeria pomeroyi (strain ATCC 700808 / DSM 15171 / DSS-3) (Silicibacter pomeroyi).